Reading from the N-terminus, the 628-residue chain is tRNA (carboxymethyluridine(34)-5-O)-methyltransferase alkbh8 (628 aa).

The region spanning 43 to 123 is the RRM domain; the sequence is QSLVVANGGL…ITLYLSFVEK (81 aa). The 118-residue stretch at 218–335 folds into the Fe2OG dioxygenase domain; it reads DPDQLTINQY…RTSFTFRKVR (118 aa). Residue 225–227 participates in 2-oxoglutarate binding; it reads NQY. Fe cation is bound by residues histidine 236 and aspartate 238. Histidine 240 serves as a coordination point for Zn(2+). Fe cation is bound at residue histidine 290. Residues arginine 326 and arginine 332 each coordinate 2-oxoglutarate. Zn(2+) contacts are provided by cysteine 339, cysteine 341, and cysteine 347. The methyltransferase domain stretch occupies residues 410-628; that stretch reads ADVGCGNGKY…GNWCVILEKL (219 aa). Residues 563–582 are disordered; that stretch reads PTNKSKVTPENKEQNEKEHG. Positions 569 to 582 are enriched in basic and acidic residues; sequence VTPENKEQNEKEHG.

This sequence belongs to the alkB family. Fe(2+) serves as cofactor.

It localises to the cytoplasm. The protein localises to the nucleus. The enzyme catalyses 5-(carboxymethyl)uridine(34) in tRNA + S-adenosyl-L-methionine = 5-(2-methoxy-2-oxoethyl)uridine(34) in tRNA + S-adenosyl-L-homocysteine. In terms of biological role, catalyzes the methylation of 5-carboxymethyl uridine to 5-methylcarboxymethyl uridine at the wobble position of the anticodon loop in tRNA via its methyltransferase domain. Catalyzes the last step in the formation of 5-methylcarboxymethyl uridine at the wobble position of the anticodon loop in target tRNA. Has a preference for tRNA(Arg) and tRNA(Glu), and does not bind tRNA(Lys). Binds tRNA and catalyzes the iron and alpha-ketoglutarate dependent hydroxylation of 5-methylcarboxymethyl uridine at the wobble position of the anticodon loop in tRNA via its dioxygenase domain, giving rise to 5-(S)-methoxycarbonylhydroxymethyluridine; has a preference for tRNA(Gly). Required for normal survival after DNA damage. May inhibit apoptosis and promote cell survival and angiogenesis. In Xenopus tropicalis (Western clawed frog), this protein is tRNA (carboxymethyluridine(34)-5-O)-methyltransferase alkbh8 (alkbh8).